Here is a 169-residue protein sequence, read N- to C-terminus: Probable chorismate pyruvate-lyase (169 aa).

Residues Arg71, Ile110, and Glu150 each coordinate substrate.

The protein belongs to the UbiC family.

It is found in the cytoplasm. The enzyme catalyses chorismate = 4-hydroxybenzoate + pyruvate. It functions in the pathway cofactor biosynthesis; ubiquinone biosynthesis. Removes the pyruvyl group from chorismate, with concomitant aromatization of the ring, to provide 4-hydroxybenzoate (4HB) for the ubiquinone pathway. This is Probable chorismate pyruvate-lyase from Acinetobacter baumannii (strain ATCC 17978 / DSM 105126 / CIP 53.77 / LMG 1025 / NCDC KC755 / 5377).